We begin with the raw amino-acid sequence, 320 residues long: TPR repeat-containing protein MJ0263 (320 aa).

TPR repeat units lie at residues 12–45 (ILKD…DKDN), 46–79 (PLVL…EGTS), 80–113 (LLSL…SKPC), 114–147 (YLSP…YPNL), 148–181 (TSIL…KKDD), 182–215 (AHAW…NENL), 216–249 (VHVY…FPND), 250–283 (VEAK…KNVK), and 289–320 (KSSI…DNNI).

The sequence is that of TPR repeat-containing protein MJ0263 from Methanocaldococcus jannaschii (strain ATCC 43067 / DSM 2661 / JAL-1 / JCM 10045 / NBRC 100440) (Methanococcus jannaschii).